The sequence spans 355 residues: 1D-myo-inositol 2-acetamido-2-deoxy-alpha-D-glucopyranoside deacetylase 3 (355 aa).

Zn(2+) contacts are provided by histidine 31, aspartate 34, and histidine 169.

It belongs to the MshB deacetylase family. Requires Zn(2+) as cofactor.

The enzyme catalyses 1D-myo-inositol 2-acetamido-2-deoxy-alpha-D-glucopyranoside + H2O = 1D-myo-inositol 2-amino-2-deoxy-alpha-D-glucopyranoside + acetate. Its function is as follows. Catalyzes the deacetylation of 1D-myo-inositol 2-acetamido-2-deoxy-alpha-D-glucopyranoside (GlcNAc-Ins) in the mycothiol biosynthesis pathway. The sequence is that of 1D-myo-inositol 2-acetamido-2-deoxy-alpha-D-glucopyranoside deacetylase 3 from Catenulispora acidiphila (strain DSM 44928 / JCM 14897 / NBRC 102108 / NRRL B-24433 / ID139908).